Consider the following 253-residue polypeptide: Imidazole glycerol phosphate synthase subunit HisF (253 aa).

Residues D11 and D130 contribute to the active site.

Belongs to the HisA/HisF family. Heterodimer of HisH and HisF.

Its subcellular location is the cytoplasm. It catalyses the reaction 5-[(5-phospho-1-deoxy-D-ribulos-1-ylimino)methylamino]-1-(5-phospho-beta-D-ribosyl)imidazole-4-carboxamide + L-glutamine = D-erythro-1-(imidazol-4-yl)glycerol 3-phosphate + 5-amino-1-(5-phospho-beta-D-ribosyl)imidazole-4-carboxamide + L-glutamate + H(+). The protein operates within amino-acid biosynthesis; L-histidine biosynthesis; L-histidine from 5-phospho-alpha-D-ribose 1-diphosphate: step 5/9. Its function is as follows. IGPS catalyzes the conversion of PRFAR and glutamine to IGP, AICAR and glutamate. The HisF subunit catalyzes the cyclization activity that produces IGP and AICAR from PRFAR using the ammonia provided by the HisH subunit. This is Imidazole glycerol phosphate synthase subunit HisF from Geotalea daltonii (strain DSM 22248 / JCM 15807 / FRC-32) (Geobacter daltonii).